The chain runs to 353 residues: Probable transport protein YPL264C (353 aa).

Residues 1–16 (MTLQRISKDYLKPNYG) lie on the Cytoplasmic side of the membrane. Residues 17 to 37 (LILLIVSYFFNSSMVVSTKVL) traverse the membrane as a helical segment. In terms of domain architecture, EamA 1 spans 24-160 (YFFNSSMVVS…SFSGVVLIIR (137 aa)). Topologically, residues 38–51 (ENDPLETSQSRINP) are extracellular. The chain crosses the membrane as a helical span at residues 52-69 (LQILLVRMSITYCCTLVY). The Cytoplasmic portion of the chain corresponds to 70–94 (MHWNKQSVPDIPWGPAPCRKWLILR). Residues 95-115 (GIMGFFGVFGMYFSLMYLSIS) traverse the membrane as a helical segment. A topological domain (extracellular) is located at residue Asp-116. Residues 117-137 (AVLITFMSPTLTIFLSFLLLG) traverse the membrane as a helical segment. Residues 138–144 (EPFSKLE) are Cytoplasmic-facing. The chain crosses the membrane as a helical span at residues 145 to 165 (ALGSLISFSGVVLIIRPTFLF). The Extracellular portion of the chain corresponds to 166-188 (GEQTQGQQSPQDDIVETQNPKLR). Residues 189 to 209 (LIAIGVSLLGVCGLSSVYIII) form a helical membrane-spanning segment. The region spanning 200-326 (CGLSSVYIII…IVSSTIWVIN (127 aa)) is the EamA 2 domain. Topologically, residues 210-218 (RYIGNKAHA) are cytoplasmic. The chain crosses the membrane as a helical span at residues 219–239 (IMSVSYFSLVTTVVAALGVLL). Topologically, residues 240 to 254 (IPSMSLQLPHSWKQW) are extracellular. The chain crosses the membrane as a helical span at residues 255–275 (GLFLNLGISGFIHQILLTMGI). Residues 276–282 (QRERAGR) lie on the Cytoplasmic side of the membrane. A helical transmembrane segment spans residues 283-303 (GSLMTYTQVIYAVFWDVVLFH). His-304 is a topological domain (extracellular). Residues 305–325 (WPNIWTWCGMAVIVSSTIWVI) traverse the membrane as a helical segment. Topologically, residues 326–353 (NMRASKQNVVATAELLSTSDFELDDLED) are cytoplasmic.

The protein resides in the membrane. The sequence is that of Probable transport protein YPL264C from Saccharomyces cerevisiae (strain ATCC 204508 / S288c) (Baker's yeast).